The chain runs to 429 residues: MKKQRNLRSMAAQAVEQVVEQGQSLSNILPPLQQKVSDKDKALLQELCFGVLRTLSQLDWLINKLMARPMTGKQRTVHYLIMVGLYQLLYTRIPPHAALAETVEGAVAIKRPQLKGLINGVLRQFQRQQDELLAEFNASDARYLHPSWLLKRLQKAYPEQWQSIVEANNQRPPMWLRVNRTHHSRDSWLALLDEAGMKGFPHADYPDAVQLETPAPVHALPGFEEGWVTVQDASAQGCMTWLAPQNGEHILDLCAAPGGKTTHILEVAPEAQVLAVDIDEQRLSRVYDNLKRLGMKATVKQGDGRYPSQWCGEQQFDRILLDAPCSATGVIRRHPDIKWLRRDRDIPELAQLQSEILDAIWPHLKSGGTLVYATCSVLPEENSLQIKAFLQRTADAELCETGTPEQPGKQNLPGAEEGDGFFYAKLIKK.

S-adenosyl-L-methionine contacts are provided by residues 254–260 (CAAPGGK), Asp277, Asp303, and Asp322. The active-site Nucleophile is the Cys375.

This sequence belongs to the class I-like SAM-binding methyltransferase superfamily. RsmB/NOP family.

Its subcellular location is the cytoplasm. The enzyme catalyses cytidine(967) in 16S rRNA + S-adenosyl-L-methionine = 5-methylcytidine(967) in 16S rRNA + S-adenosyl-L-homocysteine + H(+). Functionally, specifically methylates the cytosine at position 967 (m5C967) of 16S rRNA. In Escherichia coli O7:K1 (strain IAI39 / ExPEC), this protein is Ribosomal RNA small subunit methyltransferase B.